We begin with the raw amino-acid sequence, 338 residues long: Anthranilate phosphoribosyltransferase (338 aa).

5-phospho-alpha-D-ribose 1-diphosphate-binding positions include Gly-81, 84–85, Ser-89, 91–94, 109–117, and Ser-121; these read GD, NIST, and KHGNRSVSS. An anthranilate-binding site is contributed by Gly-81. Mg(2+) is bound at residue Ser-93. Asn-112 is an anthranilate binding site. Arg-167 provides a ligand contact to anthranilate. Mg(2+) is bound by residues Asp-226 and Glu-227.

It belongs to the anthranilate phosphoribosyltransferase family. As to quaternary structure, homodimer. Requires Mg(2+) as cofactor.

It catalyses the reaction N-(5-phospho-beta-D-ribosyl)anthranilate + diphosphate = 5-phospho-alpha-D-ribose 1-diphosphate + anthranilate. It participates in amino-acid biosynthesis; L-tryptophan biosynthesis; L-tryptophan from chorismate: step 2/5. In terms of biological role, catalyzes the transfer of the phosphoribosyl group of 5-phosphorylribose-1-pyrophosphate (PRPP) to anthranilate to yield N-(5'-phosphoribosyl)-anthranilate (PRA). The chain is Anthranilate phosphoribosyltransferase from Thioalkalivibrio sulfidiphilus (strain HL-EbGR7).